A 1557-amino-acid chain; its full sequence is Probable kinase PglW (1557 aa).

The NERD domain maps to 12–130 (SEFEHERRGL…VAEAVCFTDN (119 aa)). Protein kinase domains are found at residues 195–490 (ELER…LEVV) and 530–816 (WEVR…KVFL). ATP contacts are provided by residues 536-544 (LGTGSTSRA) and K564. Disordered regions lie at residues 615–634 (DERD…RRRE) and 821–861 (TVPS…QRDR). Over residues 830-849 (PAAPADGAAPAEGAAAGIAD) the composition is skewed to low complexity.

Belongs to the protein kinase superfamily. Ser/Thr protein kinase family.

BREX systems (bacteriophage exclusion) provide immunity against bacteriophage. Part of a type 2 BREX system. Previously called the phage growth limitation (Pgl) system, it confers protection against bacteriophage phiC31. The bacteria allows one cycle of phage infection, but subsequent cycles are impaired, protecting the original bacterial colony. The system undergoes high rates (10(-3) to 10(-4)) of phase reversion, i.e. loss and regain of phiC31 resistance. When the pglW-pglX-pglY-pglZ genes are transformed into a susceptible S.lividans (strain 1326) they confer resistance to infection by phage phiC31 and phiBT1; all 4 genes are necessary. The proteins has kinase domains and might bind DNA. In terms of biological role, autophosphorylates when synthesized in vitro, cannot be expressed in E.coli. This chain is Probable kinase PglW, found in Streptomyces coelicolor (strain ATCC BAA-471 / A3(2) / M145).